A 1175-amino-acid polypeptide reads, in one-letter code: DNA-directed RNA polymerase subunit beta (1175 aa).

Residues 1142 to 1175 (PMELSGSDDDEFDQAGASLGINLSRDERSDADIA) form a disordered region. Over residues 1165 to 1175 (SRDERSDADIA) the composition is skewed to basic and acidic residues.

This sequence belongs to the RNA polymerase beta chain family. The RNAP catalytic core consists of 2 alpha, 1 beta, 1 beta' and 1 omega subunit. When a sigma factor is associated with the core the holoenzyme is formed, which can initiate transcription.

It carries out the reaction RNA(n) + a ribonucleoside 5'-triphosphate = RNA(n+1) + diphosphate. In terms of biological role, DNA-dependent RNA polymerase catalyzes the transcription of DNA into RNA using the four ribonucleoside triphosphates as substrates. In Corynebacterium diphtheriae (strain ATCC 700971 / NCTC 13129 / Biotype gravis), this protein is DNA-directed RNA polymerase subunit beta.